A 150-amino-acid polypeptide reads, in one-letter code: UPF0178 protein Bcep18194_A4809 (150 aa).

The protein belongs to the UPF0178 family.

This chain is UPF0178 protein Bcep18194_A4809, found in Burkholderia lata (strain ATCC 17760 / DSM 23089 / LMG 22485 / NCIMB 9086 / R18194 / 383).